The sequence spans 364 residues: MNNLLLYCRPGFEKEAAAEITERASNMQCYGFARVKDDSGYVIFELYDEEQADLLARKLPFRELIFIRQMLVVTHELKDLDLSDRITPILEATQGYAICGDLRVETADTNEAKELSAFCRKFTVPLRQALRGNELLTKKETPHRPVFHAFFLANDHVLLGYSYSFNNSEFHMGIPRLRCPADAPSRSSLKLEEAFYVFVPREEWDMRLTSGMKAVDLGACPGGWTYQLVRRGMMVTAVDNGMMAQSLMDTGQVKHIRDDGFVWRPSKKNTYWLVCDMVDKPARVTHMIADWFRESDCQEAMFNLKLPMKKRYAEAVHNIEVLRELLKEIDNAFVIQAKQLYHDREEITVHVYNKYWVSKLSAKE.

Residues Ser-187, 220–223 (CPGG), Asp-239, Asp-259, and Asp-276 contribute to the S-adenosyl-L-methionine site. Lys-305 acts as the Proton acceptor in catalysis.

Belongs to the class I-like SAM-binding methyltransferase superfamily. RNA methyltransferase RlmE family. RlmM subfamily. In terms of assembly, monomer.

It is found in the cytoplasm. It catalyses the reaction cytidine(2498) in 23S rRNA + S-adenosyl-L-methionine = 2'-O-methylcytidine(2498) in 23S rRNA + S-adenosyl-L-homocysteine + H(+). Its function is as follows. Catalyzes the 2'-O-methylation at nucleotide C2498 in 23S rRNA. In Aeromonas hydrophila subsp. hydrophila (strain ATCC 7966 / DSM 30187 / BCRC 13018 / CCUG 14551 / JCM 1027 / KCTC 2358 / NCIMB 9240 / NCTC 8049), this protein is Ribosomal RNA large subunit methyltransferase M.